Consider the following 99-residue polypeptide: Biogenesis of lysosome-related organelles complex 1 subunit SNN1 (99 aa).

Positions 34 to 94 (SINELRESQA…VVLKRYEKMV (61 aa)) form a coiled coil.

Belongs to the SNAPIN family. In terms of assembly, component of the biogenesis of lysosome-related organelles complex-1 (BLOC-1).

Its subcellular location is the endosome. In terms of biological role, component of the biogenesis of lysosome-related organelles complex-1 (BLOC-1), a complex involved in endosomal cargo sorting. The sequence is that of Biogenesis of lysosome-related organelles complex 1 subunit SNN1 (SNN1) from Kluyveromyces lactis (strain ATCC 8585 / CBS 2359 / DSM 70799 / NBRC 1267 / NRRL Y-1140 / WM37) (Yeast).